Reading from the N-terminus, the 310-residue chain is Atrochrysone carboxyl ACP thioesterase CPUR_05436 (310 aa).

Residues His-105, His-107, Asp-109, and His-110 each contribute to the Zn(2+) site. The Proton donor/acceptor role is filled by Asp-109.

It belongs to the metallo-beta-lactamase superfamily. Zn(2+) serves as cofactor.

It carries out the reaction atrochrysone carboxyl-[ACP] + H2O = atrochrysone carboxylate + holo-[ACP] + H(+). Its pathway is pigment biosynthesis. Atrochrysone carboxyl ACP thioesterase; part of the ergochrome gene cluster responsible for the typical purple-black color of the ergot sclerotia. The ergochrome gene cluster produces several ergot pigments including the yellow ergochrome secalonic acid and its derivatives, as well as the red anthraquinones endocrocin and clavorubin. The pathway begins with the synthesis of atrochrysone thioester by the polyketide synthase (PKS) CPUR_05437. The atrochrysone carboxyl ACP thioesterase CPUR_05436 then breaks the thioester bond and releases the atrochrysone carboxylic acid from CPUR_05437. The atrochrysone carboxylic acid is then converted to atrochrysone which is further transformed into emodin anthrone. The next step is performed by the anthrone oxygenase CPUR_05434 that catalyzes the oxidation of emodinanthrone to emodin. Emodin is further modified to yield monodictyphenone via several steps involving CPUR_05427, CPUR_05428, CPUR_05429 and CPUR_05430. The short chain dehydrogenase/reductase CPUR_05418 then catalyzes the C-5 ketoreduction to give the xanthone skeleton of the monomeric units. Ergochromes formation requires further dimerization steps of different xanthone units, probably catalyzed by the cytochrome P450 monooxygenase CPUR_05419. CPUR_05425, CPUR_05426 and CPUR_05431 are unique to Claviceps, thus it is likely that they are involved in further modification of xanthone units or in their dimerization. The yellow ergochromes and the red anthraquinone pigments endocrocin and clavorubin are products from the same PKS derived precursors and the latter are likely shunt products in the pathway of xanthone biosynthesis. It is proposed that atrochrysone carboxylic acid released from the PKS CPUR_05437 can also be converted to endocrocin anthrone which is further oxidized into endocrocin by CPUR_05435. Endocrocin could be then modified to clavorubin, possibly by CPUR_05423 and CPUR_05431. Clavorubin is the principal anthraquinone metabolite produced by the cluster with a much higher yield compared to endocrocin. The polypeptide is Atrochrysone carboxyl ACP thioesterase CPUR_05436 (Claviceps purpurea (strain 20.1) (Ergot fungus)).